Consider the following 238-residue polypeptide: Sugar fermentation stimulation protein homolog (238 aa).

The protein belongs to the SfsA family.

The polypeptide is Sugar fermentation stimulation protein homolog (Shewanella denitrificans (strain OS217 / ATCC BAA-1090 / DSM 15013)).